The chain runs to 66 residues: Venom protein 27.1 (66 aa).

Positions 1–22 (MNTKTLIVVFLVCLLVSEVVLA) are cleaved as a signal peptide.

Contains 1 disulfide bond. In terms of tissue distribution, expressed by the venom gland.

It is found in the secreted. The protein is Venom protein 27.1 of Lychas mucronatus (Chinese swimming scorpion).